The chain runs to 430 residues: MAKIFTISLGCSKNLTDTEEMLGILNHKKHYLVADESEADTILINTCAFIKPAREEADREIKRASKLKAQGKIEKLIVAGCLTQKEGKSLPSKYPLVDAFIGLKGIEKIDNVIKRPKHSFCPAPDYIKAPDFKLQLTAPHSAYLKVADGCNNRCAYCTIPAIRGPFRSKSMEDIVAEAKAMEKNGVKEISLIAQDTTAYGQDIFGKPSLVKLLKKLVKIKGIEWFRIMYAYPETVTKDLLDFIACEPKICRYLDMPLQHISAPVLKAMNRRSTEDEVRAKIKLIRQIVPGMSLRTNFIAGFPGETAEDFEKLKKFIAEAKFNNVGVFAYSKEDGTPAAVMKRQVAEKIKKQRVEELVSAQSRVIDSINRKLKGKTVKVLLDNLFCGRSESDSPDIDGRVEVKGNKKYKAGDFVKVKITSAKGYNRTGKII.

The region spanning 2-118 (AKIFTISLGC…IDNVIKRPKH (117 aa)) is the MTTase N-terminal domain. Cys11, Cys47, Cys81, Cys150, Cys154, and Cys157 together coordinate [4Fe-4S] cluster. Residues 136 to 368 (LTAPHSAYLK…AQSRVIDSIN (233 aa)) enclose the Radical SAM core domain. A TRAM domain is found at 369–430 (RKLKGKTVKV…KGYNRTGKII (62 aa)).

Belongs to the methylthiotransferase family. RimO subfamily. The cofactor is [4Fe-4S] cluster.

It is found in the cytoplasm. It carries out the reaction L-aspartate(89)-[ribosomal protein uS12]-hydrogen + (sulfur carrier)-SH + AH2 + 2 S-adenosyl-L-methionine = 3-methylsulfanyl-L-aspartate(89)-[ribosomal protein uS12]-hydrogen + (sulfur carrier)-H + 5'-deoxyadenosine + L-methionine + A + S-adenosyl-L-homocysteine + 2 H(+). In terms of biological role, catalyzes the methylthiolation of an aspartic acid residue of ribosomal protein uS12. The polypeptide is Ribosomal protein uS12 methylthiotransferase RimO (Elusimicrobium minutum (strain Pei191)).